The sequence spans 1378 residues: Roundabout homolog 2 (1378 aa).

A signal peptide spans methionine 1 to glycine 21. The Extracellular portion of the chain corresponds to serine 22–proline 859. Ig-like C2-type domains lie at proline 31 to glutamate 127, aspartate 133 to threonine 220, proline 225 to threonine 309, proline 314 to threonine 409, and proline 418 to aspartate 504. A disulfide bond links cysteine 52 and cysteine 110. A glycan (N-linked (GlcNAc...) asparagine) is linked at asparagine 123. 3 disulfide bridges follow: cysteine 154-cysteine 203, cysteine 246-cysteine 293, and cysteine 335-cysteine 391. A glycan (N-linked (GlcNAc...) asparagine) is linked at asparagine 426. A disulfide bridge connects residues cysteine 439 and cysteine 488. Fibronectin type-III domains lie at proline 524–isoleucine 618, valine 637–alanine 735, and proline 739–arginine 836. The interval leucine 603 to valine 625 is disordered. N-linked (GlcNAc...) asparagine glycans are attached at residues asparagine 752, asparagine 782, asparagine 789, and asparagine 845. Residues alanine 860–leucine 880 form a helical membrane-spanning segment. The Cytoplasmic segment spans residues tyrosine 881–leucine 1378. Disordered regions lie at residues glycine 1032–glycine 1084, glutamate 1124–serine 1156, and aspartate 1215–valine 1348. Residues serine 1058 to serine 1067 are compositionally biased toward low complexity. Positions proline 1141 to proline 1155 are enriched in polar residues. Threonine 1154 bears the Phosphothreonine mark. Serine 1156 is modified (phosphoserine). The segment covering aspartate 1215 to leucine 1228 has biased composition (acidic residues). Polar residues predominate over residues threonine 1240–proline 1285. A compositionally biased stretch (low complexity) spans serine 1319–proline 1343.

Belongs to the immunoglobulin superfamily. ROBO family. Interacts with SLIT2.

The protein localises to the membrane. Functionally, receptor for SLIT2, and probably SLIT1, which are thought to act as molecular guidance cue in cellular migration, including axonal navigation at the ventral midline of the neural tube and projection of axons to different regions during neuronal development. The sequence is that of Roundabout homolog 2 (ROBO2) from Homo sapiens (Human).